The sequence spans 372 residues: 4-hydroxy-3-methylbut-2-en-1-yl diphosphate synthase (flavodoxin) (372 aa).

4 residues coordinate [4Fe-4S] cluster: Cys270, Cys273, Cys305, and Glu312.

This sequence belongs to the IspG family. Requires [4Fe-4S] cluster as cofactor.

It carries out the reaction (2E)-4-hydroxy-3-methylbut-2-enyl diphosphate + oxidized [flavodoxin] + H2O + 2 H(+) = 2-C-methyl-D-erythritol 2,4-cyclic diphosphate + reduced [flavodoxin]. It functions in the pathway isoprenoid biosynthesis; isopentenyl diphosphate biosynthesis via DXP pathway; isopentenyl diphosphate from 1-deoxy-D-xylulose 5-phosphate: step 5/6. Its function is as follows. Converts 2C-methyl-D-erythritol 2,4-cyclodiphosphate (ME-2,4cPP) into 1-hydroxy-2-methyl-2-(E)-butenyl 4-diphosphate. In Escherichia coli (strain SMS-3-5 / SECEC), this protein is 4-hydroxy-3-methylbut-2-en-1-yl diphosphate synthase (flavodoxin).